The primary structure comprises 97 residues: UPF0235 protein LHK_03181 (97 aa).

It belongs to the UPF0235 family.

The protein is UPF0235 protein LHK_03181 of Laribacter hongkongensis (strain HLHK9).